The following is a 289-amino-acid chain: UPF0276 protein BP2925 (289 aa).

The protein belongs to the UPF0276 family.

This is UPF0276 protein BP2925 from Bordetella pertussis (strain Tohama I / ATCC BAA-589 / NCTC 13251).